Reading from the N-terminus, the 95-residue chain is Costars family protein WS02710_H03 (95 aa).

It belongs to the costars family.

The sequence is that of Costars family protein WS02710_H03 from Picea sitchensis (Sitka spruce).